The following is a 199-amino-acid chain: Twist-related protein 1 (199 aa).

Residues Met1–Ser18 are compositionally biased toward low complexity. The disordered stretch occupies residues Met1–Glu102. Over residues Arg34–Arg43 the composition is skewed to basic residues. 2 stretches are compositionally biased toward gly residues: residues Ala46 to Glu65 and Gly80 to Ser96. Residues Thr105–Leu156 form the bHLH domain. Positions Gln158–Arg188 are sufficient for transactivation activity.

As to quaternary structure, efficient DNA binding requires dimerization with another bHLH protein. Homodimer or heterodimer with E proteins such as TCF3. ID1 binds preferentially to TCF3 but does not interact efficiently with TWIST1 so ID1 levels control the amount of TCF3 available to dimerize with TWIST and thus determine the type of dimer formed.

It is found in the nucleus. Functionally, acts as a transcriptional regulator. Inhibits myogenesis by sequestrating E proteins, inhibiting trans-activation by MEF2, and inhibiting DNA-binding by MYOD1 through physical interaction. This interaction probably involves the basic domains of both proteins. Also represses expression of pro-inflammatory cytokines such as TNFA and IL1B. Regulates cranial suture patterning and fusion. Activates transcription as a heterodimer with E proteins. Regulates gene expression differentially, depending on dimer composition. Homodimers induce expression of FGFR2 and POSTN while heterodimers repress FGFR2 and POSTN expression and induce THBS1 expression. Heterodimerization is also required for osteoblast differentiation. Represses the activity of the circadian transcriptional activator: NPAS2-BMAL1 heterodimer. The protein is Twist-related protein 1 (TWIST1) of Microcebus murinus (Gray mouse lemur).